The following is a 688-amino-acid chain: Mitochondrial potassium channel ATP-binding subunit (688 aa).

A mitochondrion-targeting transit peptide spans 1–31 (MLFHFLQAGLRQCRPPARLVGLETGLSGARG). The next 4 helical transmembrane spans lie at 115 to 135 (PQLI…LLNI), 168 to 188 (LKLL…IVLL), 268 to 288 (GLLL…GSFL), and 342 to 362 (VLGV…NCIV). Residues 121–409 (LTAVLLAFGA…MSVLFGQVVR (289 aa)) enclose the ABC transmembrane type-1 domain. An ABC transporter domain is found at 442–679 (IHFKDVSFSY…GGLYADLIRR (238 aa)). 477–484 (GQSGGGKS) is an ATP binding site.

Belongs to the ABC transporter superfamily. ABCB family. Multidrug resistance exporter (TC 3.A.1.201) subfamily. Component of the mitochondrial potassium channel (mitoK(ATP)).

The protein resides in the mitochondrion inner membrane. ATP-binding subunit of the mitochondrial ATP-gated potassium channel (mitoK(ATP)). Together with pore-forming subunit CCDC51/MITOK of the mitoK(ATP) channel, mediates ATP-dependent potassium currents across the mitochondrial inner membrane. An increase in ATP intracellular levels closes the channel, inhibiting K(+) transport, whereas a decrease in ATP levels enhances K(+) uptake in the mitochondrial matrix. Plays a role in mitochondrial iron transport. Required for maintenance of normal cardiac function, possibly by influencing mitochondrial iron export and regulating the maturation of cytosolic iron sulfur cluster-containing enzymes. This chain is Mitochondrial potassium channel ATP-binding subunit, found in Xenopus tropicalis (Western clawed frog).